A 288-amino-acid polypeptide reads, in one-letter code: MDPALLRDRELFKKRALTTPAVEKRPSASSESSKKKRAKLELSSTSGSKPSSDGSNGSFNLKSLSGSSGYKFGVLAKIVNYMKTRHQRGDTYPLTLEEILDETQHLDIGIKQKQWLMSEALVNNPKIEIIDGKYAFKPKYNLKDKKALLRLLDKHDQRGLGGILLEDIEEGLPNAQKAIKALGDQIVFVTRPDKKKILFYNDKSCQFTVDEEFQKLWRSVPVDSMDDEKIEEYLKRQGISSMQESGPKKIIPVQKRKKATSQRRRFKTHNDHLAGVLKDYTDVASGKP.

The disordered stretch occupies residues 16-56 (ALTTPAVEKRPSASSESSKKKRAKLELSSTSGSKPSSDGSN). The span at 41-56 (ELSSTSGSKPSSDGSN) shows a compositional bias: low complexity. Residues 63–143 (SLSGSSGYKF…YAFKPKYNLK (81 aa)) constitute a DNA-binding region (TFIIE beta).

Belongs to the TFIIE beta subunit family. As to quaternary structure, tetramer of two alpha and two beta chains.

It localises to the nucleus. Its function is as follows. Recruits TFIIH to the initiation complex and stimulates the RNA polymerase II C-terminal domain kinase and DNA-dependent ATPase activities of TFIIH. Both TFIIH and TFIIE are required for promoter clearance by RNA polymerase. The sequence is that of General transcription factor IIE subunit 2 (gtf2e2) from Xenopus laevis (African clawed frog).